Reading from the N-terminus, the 96-residue chain is MPAIEIGRICVKTRGREAGKKCVIVDIIDSNFVLVTGPKEINGVKRRRVNILHIEPTDKKVEINKGATDQEVKQAIEQSGLTDFIKEAVKPKIPVI.

Belongs to the eukaryotic ribosomal protein eL14 family.

The chain is Large ribosomal subunit protein eL14 from Sulfolobus acidocaldarius (strain ATCC 33909 / DSM 639 / JCM 8929 / NBRC 15157 / NCIMB 11770).